The primary structure comprises 131 residues: Large ribosomal subunit protein bL17 (131 aa).

It belongs to the bacterial ribosomal protein bL17 family. Part of the 50S ribosomal subunit. Contacts protein L32.

The sequence is that of Large ribosomal subunit protein bL17 from Herminiimonas arsenicoxydans.